The sequence spans 221 residues: GFP-like non-fluorescent chromoprotein (221 aa).

The 2-iminomethyl-5-imidazolinone (Gln-Gly) cross-link spans Gln62–Gly64. Position 63 is a 2,3-didehydrotyrosine (Tyr63).

It belongs to the GFP family. In terms of assembly, homotetramer. Contains a chromophore consisting of modified amino acid residues. The chromophore is formed by autocatalytic backbone condensation between Xaa-N and Gly-(N+2), oxidation of Tyr-(N+1) to didehydrotyrosine, and formation of a double bond to the alpha-amino nitrogen of residue Xaa-N. Maturation of the chromophore requires nothing other than molecular oxygen. The precise stereochemistry of the tyrosine has not been determined.

Functionally, non-fluorescent pigment protein that is lilac in color. The protein is GFP-like non-fluorescent chromoprotein of Goniopora tenuidens (Anemone coral).